Here is a 594-residue protein sequence, read N- to C-terminus: Glutamate decarboxylase 1 (594 aa).

Over residues 1 to 13 (MASSTPSSSATSS) the composition is skewed to low complexity. Residues 1–23 (MASSTPSSSATSSNAGADPNTTN) are disordered. Ser78 bears the Phosphoserine mark. Position 190–192 (190–192 (QLS)) interacts with 4-aminobutanoate. Position 405 is an N6-(pyridoxal phosphate)lysine (Lys405). 4-aminobutanoate is bound at residue Arg567.

Belongs to the group II decarboxylase family. Homodimer. Requires pyridoxal 5'-phosphate as cofactor.

It catalyses the reaction L-glutamate + H(+) = 4-aminobutanoate + CO2. In terms of biological role, catalyzes the synthesis of the inhibitory neurotransmitter gamma-aminobutyric acid (GABA) with pyridoxal 5'-phosphate as cofactor. In Bos taurus (Bovine), this protein is Glutamate decarboxylase 1 (GAD1).